The sequence spans 624 residues: Phosphoenolpyruvate carboxykinase (ATP) 1 (624 aa).

Positions 1–22 (MASPNGGVTTYDYDDSDSAAPV) are disordered. 322–329 (GLSGTGKT) contributes to the ATP binding site.

It belongs to the phosphoenolpyruvate carboxykinase (ATP) family. Homohexamer. Green leaves but not in roots or etiolated shoots.

The protein resides in the cytoplasm. It carries out the reaction oxaloacetate + ATP = phosphoenolpyruvate + ADP + CO2. It functions in the pathway carbohydrate biosynthesis; gluconeogenesis. This is Phosphoenolpyruvate carboxykinase (ATP) 1 (PCK1) from Urochloa panicoides (Panic liverseed grass).